Reading from the N-terminus, the 550-residue chain is Dihydroxy-acid dehydratase (550 aa).

Residue aspartate 78 coordinates Mg(2+). Residue cysteine 119 coordinates [2Fe-2S] cluster. The Mg(2+) site is built by aspartate 120 and lysine 121. Lysine 121 is subject to N6-carboxylysine. Cysteine 191 is a binding site for [2Fe-2S] cluster. Glutamate 440 is a binding site for Mg(2+). The Proton acceptor role is filled by serine 466.

Belongs to the IlvD/Edd family. Homodimer. It depends on [2Fe-2S] cluster as a cofactor. Mg(2+) is required as a cofactor.

The catalysed reaction is (2R)-2,3-dihydroxy-3-methylbutanoate = 3-methyl-2-oxobutanoate + H2O. It carries out the reaction (2R,3R)-2,3-dihydroxy-3-methylpentanoate = (S)-3-methyl-2-oxopentanoate + H2O. It participates in amino-acid biosynthesis; L-isoleucine biosynthesis; L-isoleucine from 2-oxobutanoate: step 3/4. The protein operates within amino-acid biosynthesis; L-valine biosynthesis; L-valine from pyruvate: step 3/4. Its function is as follows. Functions in the biosynthesis of branched-chain amino acids. Catalyzes the dehydration of (2R,3R)-2,3-dihydroxy-3-methylpentanoate (2,3-dihydroxy-3-methylvalerate) into 2-oxo-3-methylpentanoate (2-oxo-3-methylvalerate) and of (2R)-2,3-dihydroxy-3-methylbutanoate (2,3-dihydroxyisovalerate) into 2-oxo-3-methylbutanoate (2-oxoisovalerate), the penultimate precursor to L-isoleucine and L-valine, respectively. This Methanococcus aeolicus (strain ATCC BAA-1280 / DSM 17508 / OCM 812 / Nankai-3) protein is Dihydroxy-acid dehydratase.